The primary structure comprises 358 residues: Membrane-bound lytic murein transglycosylase C (358 aa).

The signal sequence occupies residues 1–16 (MKKILALLVIAPLLIS). The N-palmitoyl cysteine moiety is linked to residue Cys-17. Cys-17 is lipidated: S-diacylglycerol cysteine.

The protein belongs to the transglycosylase Slt family.

It localises to the cell outer membrane. It catalyses the reaction Exolytic cleavage of the (1-&gt;4)-beta-glycosidic linkage between N-acetylmuramic acid (MurNAc) and N-acetylglucosamine (GlcNAc) residues in peptidoglycan, from either the reducing or the non-reducing ends of the peptidoglycan chains, with concomitant formation of a 1,6-anhydrobond in the MurNAc residue.. In terms of biological role, murein-degrading enzyme. May play a role in recycling of muropeptides during cell elongation and/or cell division. The chain is Membrane-bound lytic murein transglycosylase C from Serratia proteamaculans (strain 568).